The sequence spans 296 residues: DNA repair protein complementing XP-A cells homolog (296 aa).

A compositionally biased stretch (polar residues) spans Met-1 to Ser-10. Positions Met-1–Arg-39 are disordered. Residues Ala-26–Arg-39 are compositionally biased toward basic and acidic residues. The short motif at Ala-26–Pro-47 is the Nuclear localization signal element. Zn(2+)-binding residues include Cys-126, Cys-129, Cys-147, and Cys-150. Residues Cys-126–Cys-150 fold into a zinc finger.

It belongs to the XPA family. In terms of tissue distribution, strongly expressed in the central nervous system and muscles.

It is found in the nucleus. In terms of biological role, involved in DNA excision repair. Initiates repair by binding to damaged sites with various affinities, depending on the photoproduct and the transcriptional state of the region. The protein is DNA repair protein complementing XP-A cells homolog (Xpac) of Drosophila melanogaster (Fruit fly).